Consider the following 170-residue polypeptide: RNA polymerase sigma factor TcsR (170 aa).

The sigma-70 factor domain-4 stretch occupies residues 122-169; the sequence is IKDLTQNEKNILRKIYLHGLRESEISRELNISRQAVNKTHLRALEKLK. A DNA-binding region (H-T-H motif) is located at residues 143 to 162; it reads ESEISRELNISRQAVNKTHL.

The protein belongs to the sigma-70 factor family.

Its function is as follows. Sigma factors are initiation factors that promote the attachment of RNA polymerase to specific initiation sites and are then released. Transcriptional regulator specifically required to activate expression of the toxin gene locus, composed of tcsL and tcdE/utxA. The sequence is that of RNA polymerase sigma factor TcsR from Paraclostridium sordellii (strain ATCC 9714 / DSM 2141 / JCM 3814 / LMG 15708 / NCIMB 10717 / 211) (Clostridium sordellii).